The following is a 428-amino-acid chain: Patatin-like protein 3 (428 aa).

A PNPLA domain is found at 38–252; it reads LSIDGGGIRG…AANNPTLCAI (215 aa). The GXGXXG signature appears at 42-47; sequence GGGIRG. The GXSXG motif lies at 80–84; the sequence is GTSTG. Serine 82 serves as the catalytic Nucleophile. The active-site Proton acceptor is aspartate 239. Positions 239–241 match the DGA/G motif; the sequence is DGG. Residue serine 423 is modified to Phosphoserine.

Belongs to the patatin family. As to expression, expressed specifically in the stigma, ovary and funiculus of the ovary.

It localises to the cytoplasm. Functionally, possesses non-specific lipolytic acyl hydrolase (LAH) activity. Catalyzes the hydrolysis of the neutral lipids monogalactosyldiacylglycerol (MGDG), digalactosyldiacylglycerol (DGDG) and phosphatidylglycerol (PG), and less efficiently the polar lipids phosphatidylcholine (PC) and phosphatidylinositol (PI), but not the storage lipid triacylglycerol (TAG). May play a role in root development. In Arabidopsis thaliana (Mouse-ear cress), this protein is Patatin-like protein 3 (PLP3).